A 415-amino-acid polypeptide reads, in one-letter code: ATP-dependent RNA helicase RhlB (415 aa).

A Q motif motif is present at residues 9–37 (QRFSDLSLHPIVRDTLAKKGFDFCTPIQA). A Helicase ATP-binding domain is found at 40 to 218 (LPISLNGRDV…FEDMNDPEYI (179 aa)). ATP is bound at residue 53-60 (AQTGTGKT). A DEAD box motif is present at residues 164-167 (DEAD). A Helicase C-terminal domain is found at 241–389 (DKMALLLTLM…VSQYETEALL (149 aa)).

This sequence belongs to the DEAD box helicase family. RhlB subfamily. In terms of assembly, component of the RNA degradosome, which is a multiprotein complex involved in RNA processing and mRNA degradation.

The protein resides in the cytoplasm. The enzyme catalyses ATP + H2O = ADP + phosphate + H(+). In terms of biological role, DEAD-box RNA helicase involved in RNA degradation. Has RNA-dependent ATPase activity and unwinds double-stranded RNA. The polypeptide is ATP-dependent RNA helicase RhlB (Haemophilus influenzae (strain PittEE)).